An 83-amino-acid polypeptide reads, in one-letter code: Molybdopterin synthase sulfur carrier subunit (83 aa).

The protein belongs to the MoaD family.

It participates in cofactor biosynthesis; molybdopterin biosynthesis. Functionally, involved in sulfur transfer in the conversion of molybdopterin precursor Z to molybdopterin. Probably plays a role in host phagosome maturation arrest. In Mycobacterium tuberculosis (strain ATCC 25618 / H37Rv), this protein is Molybdopterin synthase sulfur carrier subunit (moaD1).